A 222-amino-acid polypeptide reads, in one-letter code: UPF0758 protein YicR (222 aa).

The 123-residue stretch at 100-222 (PLLSPEMTRE…YVSFAERGWI (123 aa)) folds into the MPN domain. Zn(2+) contacts are provided by His171, His173, and Asp184. The short motif at 171 to 184 (HNHPSGCAEPSKAD) is the JAMM motif element.

The protein belongs to the UPF0758 family. YicR subfamily.

The polypeptide is UPF0758 protein YicR (Escherichia coli O45:K1 (strain S88 / ExPEC)).